Reading from the N-terminus, the 590-residue chain is J protein JJJ1 (590 aa).

In terms of domain architecture, J spans 3–72 (TCYYELLGVE…RAWYDSHKEQ (70 aa)). Over residues 269–284 (EQRKLKEQQRKNELNN) the composition is skewed to basic and acidic residues. Residues 269-293 (EQRKLKEQQRKNELNNRRKFGNDNN) form a disordered region. The C2H2-type 1 zinc finger occupies 338–362 (YECFICNKTFKSEKQLKNHINTKLH). At serine 393 the chain carries Phosphoserine. The interval 441–546 (EVEDVSSDEN…TLPSSMSPTS (106 aa)) is disordered. Basic residues predominate over residues 455–467 (TKNKKKRKKKKKA). Over residues 480-489 (DDTKDKRSNE) the composition is skewed to basic and acidic residues. Threonine 504 carries the phosphothreonine modification. Residues 513–527 (KAKKKKGKQPKKNSK) show a composition bias toward basic residues. The span at 528–546 (STKSTPSLSTLPSSMSPTS) shows a compositional bias: low complexity. The C2H2-type 2 zinc finger occupies 549-573 (EVCTTCGESFDSRNKLFNHVKIAGH).

Its subcellular location is the nucleus. The polypeptide is J protein JJJ1 (JJJ1) (Saccharomyces cerevisiae (strain ATCC 204508 / S288c) (Baker's yeast)).